A 388-amino-acid polypeptide reads, in one-letter code: Diphosphomevalonate decarboxylase (388 aa).

Residues 19–22, Arg74, 153–158, and Thr209 each bind (R)-5-diphosphomevalonate; these read YWGK and SGSACR. The segment at 367-388 is disordered; that stretch reads QGPQGSSESLINDKGLPKAVAN.

This sequence belongs to the diphosphomevalonate decarboxylase family. Homodimer.

It catalyses the reaction (R)-5-diphosphomevalonate + ATP = isopentenyl diphosphate + ADP + phosphate + CO2. It functions in the pathway isoprenoid biosynthesis; isopentenyl diphosphate biosynthesis via mevalonate pathway; isopentenyl diphosphate from (R)-mevalonate: step 3/3. In terms of biological role, diphosphomevalonate decarboxylase; part of the second module of ergosterol biosynthesis pathway that includes the middle steps of the pathway. The second module is carried out in the vacuole and involves the formation of farnesyl diphosphate, which is also an important intermediate in the biosynthesis of ubiquinone, dolichol, heme and prenylated proteins. Activity by the mevalonate kinase ERG12 first converts mevalonate into 5-phosphomevalonate. 5-phosphomevalonate is then further converted to 5-diphosphomevalonate by the phosphomevalonate kinase ERG8. The diphosphomevalonate decarboxylase MVD1/ERG19 then produces isopentenyl diphosphate. The isopentenyl-diphosphate delta-isomerase IDI1 then catalyzes the 1,3-allylic rearrangement of the homoallylic substrate isopentenyl (IPP) to its highly electrophilic allylic isomer, dimethylallyl diphosphate (DMAPP). Finally the farnesyl diphosphate synthase ERG20 catalyzes the sequential condensation of isopentenyl pyrophosphate with dimethylallyl pyrophosphate, and then with the resultant geranylpyrophosphate to the ultimate product farnesyl pyrophosphate. This chain is Diphosphomevalonate decarboxylase, found in Debaryomyces hansenii (strain ATCC 36239 / CBS 767 / BCRC 21394 / JCM 1990 / NBRC 0083 / IGC 2968) (Yeast).